We begin with the raw amino-acid sequence, 158 residues long: Transcriptional regulator MraZ (158 aa).

SpoVT-AbrB domains are found at residues Ile5–Tyr50 and Ala91–Glu134.

The protein belongs to the MraZ family. As to quaternary structure, forms oligomers.

Its subcellular location is the cytoplasm. It localises to the nucleoid. This Geobacter metallireducens (strain ATCC 53774 / DSM 7210 / GS-15) protein is Transcriptional regulator MraZ.